We begin with the raw amino-acid sequence, 150 residues long: 3-dehydroquinate dehydratase (150 aa).

Catalysis depends on tyrosine 26, which acts as the Proton acceptor. The substrate site is built by asparagine 77, histidine 83, and aspartate 90. The active-site Proton donor is histidine 103. Residues 104-105 and arginine 114 each bind substrate; that span reads LS.

The protein belongs to the type-II 3-dehydroquinase family. As to quaternary structure, homododecamer.

It carries out the reaction 3-dehydroquinate = 3-dehydroshikimate + H2O. It functions in the pathway metabolic intermediate biosynthesis; chorismate biosynthesis; chorismate from D-erythrose 4-phosphate and phosphoenolpyruvate: step 3/7. In terms of biological role, catalyzes a trans-dehydration via an enolate intermediate. The sequence is that of 3-dehydroquinate dehydratase from Histophilus somni (strain 129Pt) (Haemophilus somnus).